The chain runs to 598 residues: MLKTHSCALTQENVGTEVTLAGWVHRRRDHGGVIFIDLRDREGIVQVIFNPEQSAACLDIGKELRSEYVLQVKGVVSHRPAGTENNRMPSGMVEVVAVNAKILNAAKTPPFYINEEVEVDESLRLKYRYLDIRRQGMKNNLIIRHKAVRFMREFLNDQGFIEIETPILIKSTPEGARDYLVPSRLFPGKFFALPQSPQQLKQLLMVAGMEKYYQVARCFRDEDLRADRQPEFTQLDMEMSFVDEEDMMKLMEDLFTGLVANVRPDMKYNKKFPRISFADAMEKYGCDKPDLRFGMELADITDIGASSAFGVFKNVAAQGGAIKAISAPGCGGYNKSQQEELINLAKKYGAAGLVPISLGVENGVLKDLTMEMVKSVAAKYLALEEIKTIAERSGAKPGDLILIVAGARKMVNTVLGEMRNQLAVKLNLCDKNELSFAFVVDFPLFQWDEEGKRWDSVHHPFTAPLESDMPLMDTDPGRVGSRAYDVVCNGYEIAGGSIRIHQADLQRKVFHLLGYNDEQIDERFGHLLEAFEFGAPPHGGVAPGIDRFVMLLAGETSIREVISFPKNQAAQDLLFGAPSVVDDKQIKDLHIRIQAEKE.

Glutamate 174 is an L-aspartate binding site. The tract at residues 198–201 is aspartate; sequence QQLK. L-aspartate is bound at residue arginine 220. ATP is bound by residues 220-222 and glutamine 229; that span reads RDE. Histidine 458 provides a ligand contact to L-aspartate. An ATP-binding site is contributed by glutamate 492. Arginine 499 provides a ligand contact to L-aspartate. 544 to 547 is an ATP binding site; it reads GIDR.

This sequence belongs to the class-II aminoacyl-tRNA synthetase family. Type 1 subfamily. As to quaternary structure, homodimer.

The protein localises to the cytoplasm. The enzyme catalyses tRNA(Asx) + L-aspartate + ATP = L-aspartyl-tRNA(Asx) + AMP + diphosphate. Its function is as follows. Aspartyl-tRNA synthetase with relaxed tRNA specificity since it is able to aspartylate not only its cognate tRNA(Asp) but also tRNA(Asn). Reaction proceeds in two steps: L-aspartate is first activated by ATP to form Asp-AMP and then transferred to the acceptor end of tRNA(Asp/Asn). This chain is Aspartate--tRNA(Asp/Asn) ligase, found in Dehalococcoides mccartyi (strain CBDB1).